We begin with the raw amino-acid sequence, 305 residues long: tRNA dimethylallyltransferase (305 aa).

12-19 (GPTASGKT) is a binding site for ATP. 14–19 (TASGKT) serves as a coordination point for substrate. Interaction with substrate tRNA stretches follow at residues 37–40 (DSAL), 161–165 (QRLAR), and 242–247 (RCVGYR).

Belongs to the IPP transferase family. As to quaternary structure, monomer. The cofactor is Mg(2+).

It carries out the reaction adenosine(37) in tRNA + dimethylallyl diphosphate = N(6)-dimethylallyladenosine(37) in tRNA + diphosphate. Functionally, catalyzes the transfer of a dimethylallyl group onto the adenine at position 37 in tRNAs that read codons beginning with uridine, leading to the formation of N6-(dimethylallyl)adenosine (i(6)A). The sequence is that of tRNA dimethylallyltransferase from Psychromonas ingrahamii (strain DSM 17664 / CCUG 51855 / 37).